A 520-amino-acid polypeptide reads, in one-letter code: GMP synthase [glutamine-hydrolyzing] (520 aa).

The Glutamine amidotransferase type-1 domain maps to 9–202 (KILILDFGSQ…VRAICGCTGH (194 aa)). Cys-86 functions as the Nucleophile in the catalytic mechanism. Catalysis depends on residues His-176 and Glu-178. In terms of domain architecture, GMPS ATP-PPase spans 203-395 (WTPGQIIEDA…LGLPHQMVWR (193 aa)). 230–236 (SGGVDSS) contacts ATP.

As to quaternary structure, homodimer.

The enzyme catalyses XMP + L-glutamine + ATP + H2O = GMP + L-glutamate + AMP + diphosphate + 2 H(+). It functions in the pathway purine metabolism; GMP biosynthesis; GMP from XMP (L-Gln route): step 1/1. Its function is as follows. Catalyzes the synthesis of GMP from XMP. The chain is GMP synthase [glutamine-hydrolyzing] from Pelobacter propionicus (strain DSM 2379 / NBRC 103807 / OttBd1).